Consider the following 333-residue polypeptide: Glycerol-3-phosphate dehydrogenase [NAD(P)+] (333 aa).

NADPH contacts are provided by Trp15 and Lys108. Positions 108, 136, and 138 each coordinate sn-glycerol 3-phosphate. Ala140 is an NADPH binding site. Lys191, Asp244, Ser254, Arg255, and Asn256 together coordinate sn-glycerol 3-phosphate. Lys191 serves as the catalytic Proton acceptor. An NADPH-binding site is contributed by Arg255. NADPH is bound by residues Val279 and Glu281.

Belongs to the NAD-dependent glycerol-3-phosphate dehydrogenase family.

The protein localises to the cytoplasm. It carries out the reaction sn-glycerol 3-phosphate + NAD(+) = dihydroxyacetone phosphate + NADH + H(+). The catalysed reaction is sn-glycerol 3-phosphate + NADP(+) = dihydroxyacetone phosphate + NADPH + H(+). Its pathway is membrane lipid metabolism; glycerophospholipid metabolism. Catalyzes the reduction of the glycolytic intermediate dihydroxyacetone phosphate (DHAP) to sn-glycerol 3-phosphate (G3P), the key precursor for phospholipid synthesis. This is Glycerol-3-phosphate dehydrogenase [NAD(P)+] from Maricaulis maris (strain MCS10) (Caulobacter maris).